A 325-amino-acid chain; its full sequence is Melanocortin receptor 5 (325 aa).

Residues 1–37 lie on the Extracellular side of the membrane; that stretch reads MNSSSTLTVLNLTLNASEDGILGSNVKNKSLACEEMG. Residues N2, N11, N15, and N28 are each glycosylated (N-linked (GlcNAc...) asparagine). A helical transmembrane segment spans residues 38–61; the sequence is IAVEVFLTLGLVSLLENILVIGAI. At 62–73 the chain is on the cytoplasmic side; the sequence is VKNKNLHSPMYF. Residues 74 to 97 traverse the membrane as a helical segment; sequence FVGSLAVADMLVSMSNAWETVTIY. Over 98-114 the chain is Extracellular; that stretch reads LLNNKHLVIADTFVRHI. The helical transmembrane segment at 115–138 threads the bilayer; the sequence is DNVFDSMICISVVASMCSLLAIAV. Over 139–155 the chain is Cytoplasmic; sequence DRYITIFYALRYHHIMT. Residues 156-179 form a helical membrane-spanning segment; it reads ARRSGVIIACIWTFCISCGIVFII. The Extracellular portion of the chain corresponds to 180-186; that stretch reads YYESKYV. Residues 187–211 traverse the membrane as a helical segment; sequence IICLISMFFTMLFFMVSLYIHMFLL. At 212 to 239 the chain is on the cytoplasmic side; the sequence is ARNHVKRIAASPRYNSVRQRTSMKGAIT. A helical transmembrane segment spans residues 240–265; sequence LTMLLGIFIVCWSPFFLHLILMISCP. At 266–273 the chain is on the extracellular side; that stretch reads QNVYCSCF. The chain crosses the membrane as a helical span at residues 274–297; it reads MSYFNMYLILIMCNSVIDPLIYAL. At 298–325 the chain is on the cytoplasmic side; it reads RSQEMRRTFKEIVCCHGFRRPCRLLGGY. S-palmitoyl cysteine attachment occurs at residues C311 and C312.

The protein belongs to the G-protein coupled receptor 1 family. As to expression, skin, adrenal gland, skeletal muscle, bone marrow, spleen, thymus, gonads, uterus and brain.

The protein localises to the cell membrane. In terms of biological role, receptor for MSH (alpha, beta and gamma) and ACTH. The activity of this receptor is mediated by G proteins which activate adenylate cyclase. This receptor is a possible mediator of the immunomodulation properties of melanocortins. The sequence is that of Melanocortin receptor 5 (Mc5r) from Mus musculus (Mouse).